Consider the following 258-residue polypeptide: Undecaprenyl-diphosphatase (258 aa).

A run of 8 helical transmembrane segments spans residues 1–21 (MSIIDAVILGIVEGLTEFLPV), 42–62 (LKCFEVVIQLGSILAVVFTFF), 71–91 (LWIKLIIGFLPTAAIGYLLYS), 96–116 (LFSQNVVVYMLIIWGVIFIVV), 134–154 (GISYKQAFFIGLSQCFAMVPG), 173–193 (QTAAAFSFLLAVPTMFAATFY), 211–231 (LFLLGGFVAFLVALFAIKMFL), and 237–257 (FDYIPFGIYRILIAFAFMFFV).

Belongs to the UppP family.

The protein localises to the cell inner membrane. It carries out the reaction di-trans,octa-cis-undecaprenyl diphosphate + H2O = di-trans,octa-cis-undecaprenyl phosphate + phosphate + H(+). In terms of biological role, catalyzes the dephosphorylation of undecaprenyl diphosphate (UPP). Confers resistance to bacitracin. This is Undecaprenyl-diphosphatase from Campylobacter hominis (strain ATCC BAA-381 / DSM 21671 / CCUG 45161 / LMG 19568 / NCTC 13146 / CH001A).